The sequence spans 421 residues: Early growth response protein 2 (421 aa).

The span at Cys127 to Ser145 shows a compositional bias: low complexity. Disordered stretches follow at residues Cys127 to Asp152, Ser179 to Gly200, and Ser223 to Tyr288. The span at Pro236–Gly247 shows a compositional bias: polar residues. C2H2-type zinc fingers lie at residues Tyr288–His312, Phe318–His340, and Phe346–His368.

This sequence belongs to the EGR C2H2-type zinc-finger protein family.

It localises to the nucleus. In terms of biological role, sequence-specific DNA-binding transcription factor. This Xenopus laevis (African clawed frog) protein is Early growth response protein 2 (egr2).